Reading from the N-terminus, the 90-residue chain is Putative septation protein SpoVG (90 aa).

It belongs to the SpoVG family.

In terms of biological role, could be involved in septation. The chain is Putative septation protein SpoVG from Clostridium perfringens (strain ATCC 13124 / DSM 756 / JCM 1290 / NCIMB 6125 / NCTC 8237 / Type A).